Consider the following 967-residue polypeptide: Aminopeptidase N (967 aa).

Residues 1–8 are Cytoplasmic-facing; that stretch reads MAKGFYIS. Residues 9–32 traverse the membrane as a helical; Signal-anchor for type II membrane protein segment; that stretch reads KPVGILAILLGVAAVCTIIALSVV. Residues 33 to 66 form a cytosolic Ser/Thr-rich junction region; sequence YSQEKNRSTESSTAASTAAPTGPTTTVATTLDQS. The Extracellular segment spans residues 33–967; the sequence is YSQEKNRSTE…VVLRWFTENS (935 aa). N-linked (GlcNAc...) asparagine glycosylation occurs at Asn38. Residues 41-61 form a disordered region; it reads TESSTAASTAAPTGPTTTVAT. A metalloprotease region spans residues 67-967; that stretch reads KPWNVYRLPK…VVLRWFTENS (901 aa). Residues Asn84 and Asn126 are each glycosylated (N-linked (GlcNAc...) asparagine). The residue at position 175 (Tyr175) is a Sulfotyrosine. 2 N-linked (GlcNAc...) asparagine glycosylation sites follow: Asn233 and Asn338. 351-355 is a substrate binding site; sequence GAMEN. His387 serves as a coordination point for Zn(2+). Glu388 acts as the Proton acceptor in catalysis. Residues His391 and Glu410 each coordinate Zn(2+). Tyr418 carries the post-translational modification Sulfotyrosine. N-linked (GlcNAc...) asparagine glycans are attached at residues Asn626, Asn682, and Asn740. Residues 670–840 form an interaction with FCoV and TGEV spike glycoprotein region; it reads ASAQKVPVTL…GALACSNQVW (171 aa). 2 disulfide bridges follow: Cys762-Cys769 and Cys799-Cys835.

Belongs to the peptidase M1 family. Homodimer. Interacts with SLC6A19. As to quaternary structure, (Microbial infection) Interacts with FCoV, CCoV, TGEV and HCoV-229E spike glycoprotein. Requires Zn(2+) as cofactor. Sulfated. Post-translationally, N- and O-glycosylated. In terms of processing, may undergo proteolysis and give rise to a soluble form.

It is found in the cell membrane. It carries out the reaction Release of an N-terminal amino acid, Xaa-|-Yaa- from a peptide, amide or arylamide. Xaa is preferably Ala, but may be most amino acids including Pro (slow action). When a terminal hydrophobic residue is followed by a prolyl residue, the two may be released as an intact Xaa-Pro dipeptide.. Its function is as follows. Broad specificity aminopeptidase which plays a role in the final digestion of peptides generated from hydrolysis of proteins by gastric and pancreatic proteases. Also involved in the processing of various peptides including peptide hormones, such as angiotensin III and IV, neuropeptides, and chemokines. May also be involved the cleavage of peptides bound to major histocompatibility complex class II molecules of antigen presenting cells. May have a role in angiogenesis and promote cholesterol crystallization. May have a role in amino acid transport by acting as binding partner of amino acid transporter SLC6A19 and regulating its activity. Functionally, (Microbial infection) In case of feline coronavirus (FCoV) infection, serves as a receptor for FCoV spike glycoprotein. It is as well a receptor for other serogroup I coronaviruses, like canine coronavirus (CCoV), porcine transmissible gastroenteritis virus (TGEV), and human coronavirus 229E (HCoV-229E). Also serves as a receptor for infectious bronchitis virus (IBV, Arkansas 99 serotype) in serogroup III. The polypeptide is Aminopeptidase N (ANPEP) (Felis catus (Cat)).